Reading from the N-terminus, the 25-residue chain is Cytochrome c oxidase polypeptide VIIc (25 aa).

Positions 1 to 25 (SHYSEGPGQNLPFSVQNKXRLLGMM) are disordered.

The protein belongs to the cytochrome c oxidase VIIc family. Component of the cytochrome c oxidase (complex IV, CIV), a multisubunit enzyme composed of 14 subunits. The complex is composed of a catalytic core of 3 subunits MT-CO1, MT-CO2 and MT-CO3, encoded in the mitochondrial DNA, and 11 supernumerary subunits COX4I, COX5A, COX5B, COX6A, COX6B, COX6C, COX7A, COX7B, COX7C, COX8 and NDUFA4, which are encoded in the nuclear genome. The complex exists as a monomer or a dimer and forms supercomplexes (SCs) in the inner mitochondrial membrane with NADH-ubiquinone oxidoreductase (complex I, CI) and ubiquinol-cytochrome c oxidoreductase (cytochrome b-c1 complex, complex III, CIII), resulting in different assemblies (supercomplex SCI(1)III(2)IV(1) and megacomplex MCI(2)III(2)IV(2)). Interacts with RAB5IF.

It localises to the mitochondrion inner membrane. It participates in energy metabolism; oxidative phosphorylation. Component of the cytochrome c oxidase, the last enzyme in the mitochondrial electron transport chain which drives oxidative phosphorylation. The respiratory chain contains 3 multisubunit complexes succinate dehydrogenase (complex II, CII), ubiquinol-cytochrome c oxidoreductase (cytochrome b-c1 complex, complex III, CIII) and cytochrome c oxidase (complex IV, CIV), that cooperate to transfer electrons derived from NADH and succinate to molecular oxygen, creating an electrochemical gradient over the inner membrane that drives transmembrane transport and the ATP synthase. Cytochrome c oxidase is the component of the respiratory chain that catalyzes the reduction of oxygen to water. Electrons originating from reduced cytochrome c in the intermembrane space (IMS) are transferred via the dinuclear copper A center (CU(A)) of subunit 2 and heme A of subunit 1 to the active site in subunit 1, a binuclear center (BNC) formed by heme A3 and copper B (CU(B)). The BNC reduces molecular oxygen to 2 water molecules using 4 electrons from cytochrome c in the IMS and 4 protons from the mitochondrial matrix. The sequence is that of Cytochrome c oxidase polypeptide VIIc from Oncorhynchus mykiss (Rainbow trout).